Consider the following 99-residue polypeptide: Integration host factor subunit alpha (99 aa).

The tract at residues 49-73 (FGNFDLRDKNQRPGRNPKTGEDIPI) is disordered.

The protein belongs to the bacterial histone-like protein family. As to quaternary structure, heterodimer of an alpha and a beta chain.

This protein is one of the two subunits of integration host factor, a specific DNA-binding protein that functions in genetic recombination as well as in transcriptional and translational control. This Shigella boydii serotype 18 (strain CDC 3083-94 / BS512) protein is Integration host factor subunit alpha.